A 288-amino-acid polypeptide reads, in one-letter code: Hydroxyethylthiazole kinase (288 aa).

Met-55 contacts substrate. 2 residues coordinate ATP: Asn-131 and Ser-177. Substrate is bound at residue Gly-204.

This sequence belongs to the Thz kinase family. The cofactor is Mg(2+).

It catalyses the reaction 5-(2-hydroxyethyl)-4-methylthiazole + ATP = 4-methyl-5-(2-phosphooxyethyl)-thiazole + ADP + H(+). It participates in cofactor biosynthesis; thiamine diphosphate biosynthesis; 4-methyl-5-(2-phosphoethyl)-thiazole from 5-(2-hydroxyethyl)-4-methylthiazole: step 1/1. Its function is as follows. Catalyzes the phosphorylation of the hydroxyl group of 4-methyl-5-beta-hydroxyethylthiazole (THZ). This is Hydroxyethylthiazole kinase from Haloquadratum walsbyi (strain DSM 16790 / HBSQ001).